The chain runs to 260 residues: Serine/threonine-protein acetyltransferase NGR_a02610 (260 aa).

Catalysis depends on residues histidine 123 and glutamate 143. Histidine 123 is a binding site for CoA. Position 180–181 (180–181 (KS)) interacts with CoA. Cysteine 185 is a catalytic residue.

It belongs to the acetyltransferase YopJ family.

The catalysed reaction is L-threonyl-[protein] + acetyl-CoA = O-acetyl-L-threonyl-[protein] + CoA. The enzyme catalyses L-seryl-[protein] + acetyl-CoA = O-acetyl-L-seryl-[protein] + CoA. Serine/threonine-protein acetyltransferase translocated into infected cells, which mediates acetylation of serine and threonine residues of host target proteins. The protein is Serine/threonine-protein acetyltransferase NGR_a02610 of Sinorhizobium fredii (strain NBRC 101917 / NGR234).